A 288-amino-acid chain; its full sequence is Phosphate import ATP-binding protein PstB (288 aa).

The 242-residue stretch at 42-283 folds into the ABC transporter domain; the sequence is IRDLNFYYEN…PKEKKTRDYI (242 aa). An ATP-binding site is contributed by 74-81; that stretch reads GPSGCGKS.

The protein belongs to the ABC transporter superfamily. Phosphate importer (TC 3.A.1.7) family. As to quaternary structure, the complex is composed of two ATP-binding proteins (PstB), two transmembrane proteins (PstC and PstA) and a solute-binding protein (PstS).

It is found in the cell membrane. It catalyses the reaction phosphate(out) + ATP + H2O = ADP + 2 phosphate(in) + H(+). Functionally, part of the ABC transporter complex PstSACB involved in phosphate import. Responsible for energy coupling to the transport system. In Malacoplasma penetrans (strain HF-2) (Mycoplasma penetrans), this protein is Phosphate import ATP-binding protein PstB.